Consider the following 868-residue polypeptide: Translation initiation factor IF-2 (868 aa).

Disordered stretches follow at residues 49–72 (LSKQ…TSTL) and 92–276 (KRSD…EHLK). A compositionally biased stretch (basic and acidic residues) spans 92–240 (KRSDIEEQQR…KKAEAEEVHL (149 aa)). The 170-residue stretch at 368 to 537 (SRAPVVTIMG…VLQSELLDLQ (170 aa)) folds into the tr-type G domain. The segment at 377 to 384 (GHVDHGKT) is G1. 377–384 (GHVDHGKT) contacts GTP. The segment at 402–406 (GITQH) is G2. Residues 423–426 (DTPG) are G3. Residues 423–427 (DTPGH) and 477–480 (NKMD) contribute to the GTP site. Positions 477–480 (NKMD) are G4. Residues 513–515 (SAK) are G5.

This sequence belongs to the TRAFAC class translation factor GTPase superfamily. Classic translation factor GTPase family. IF-2 subfamily.

The protein resides in the cytoplasm. In terms of biological role, one of the essential components for the initiation of protein synthesis. Protects formylmethionyl-tRNA from spontaneous hydrolysis and promotes its binding to the 30S ribosomal subunits. Also involved in the hydrolysis of GTP during the formation of the 70S ribosomal complex. This chain is Translation initiation factor IF-2, found in Alteromonas mediterranea (strain DSM 17117 / CIP 110805 / LMG 28347 / Deep ecotype).